Reading from the N-terminus, the 489-residue chain is MVSFLDRPPTEFDLILDPAKLNSAAFFSNDEFRAVLKSLIGDLKKNQRPNYFNSLVDQMINVYAHISAGEHADALVRIIDATCVVVTNLPSNVFLKKLKTNKFTDSIDYLILPHFILWDYNFVVFLNNTFNSKHENSLVDISGALQKIKLTHGVIKDQLQSKNGYAVQYSYSTFLNTASFYANVQCLNGVNEVMPPLHSVRRYFGRDVPHARAWTTRHPNISQLSTQVSDVRVNDRDTDWNVKVGLGIFPGANTDCDGDKKIITYLPRPNSLIDLECLLYGDPRYSFICFDKNRLTFVSQQIFYLHKNVEAVERLLKTMPLAFALWRIHANVKFSARLELLLRDFCLVASSNASYLLFKQLTELIKDEEMVCADEELFGLSGQFTDMVNSGAKGSAALIESTRQYARTRATDIDIVSTRATTSLNSYISSHNKVQVCGADIYHNTAVLQNLYIKNNYICYKNDDRRIASICALPSEYLFPEHLLDLFIE.

This sequence belongs to the baculoviridae LEF-9 family.

Functionally, involved in late/very late gene activation. The sequence is that of Late expression factor 9 (LEF-9) from Orgyia pseudotsugata multicapsid polyhedrosis virus (OpMNPV).